A 511-amino-acid chain; its full sequence is ATP synthase subunit alpha 2 (511 aa).

Gly173–Ser180 serves as a coordination point for ATP.

Belongs to the ATPase alpha/beta chains family. As to quaternary structure, F-type ATPases have 2 components, CF(1) - the catalytic core - and CF(0) - the membrane proton channel. CF(1) has five subunits: alpha(3), beta(3), gamma(1), delta(1), epsilon(1). CF(0) has three main subunits: a(1), b(2) and c(9-12). The alpha and beta chains form an alternating ring which encloses part of the gamma chain. CF(1) is attached to CF(0) by a central stalk formed by the gamma and epsilon chains, while a peripheral stalk is formed by the delta and b chains.

It localises to the cell inner membrane. It carries out the reaction ATP + H2O + 4 H(+)(in) = ADP + phosphate + 5 H(+)(out). Produces ATP from ADP in the presence of a proton gradient across the membrane. The alpha chain is a regulatory subunit. The polypeptide is ATP synthase subunit alpha 2 (Nitrosospira multiformis (strain ATCC 25196 / NCIMB 11849 / C 71)).